We begin with the raw amino-acid sequence, 208 residues long: 2-phospho-L-lactate guanylyltransferase (208 aa).

This sequence belongs to the CofC family. In terms of assembly, homodimer.

The enzyme catalyses (2S)-2-phospholactate + GTP + H(+) = (2S)-lactyl-2-diphospho-5'-guanosine + diphosphate. It functions in the pathway cofactor biosynthesis; coenzyme F420 biosynthesis. In terms of biological role, guanylyltransferase that catalyzes the activation of (2S)-2-phospholactate (2-PL) as (2S)-lactyl-2-diphospho-5'-guanosine, via the condensation of 2-PL with GTP. It is involved in the biosynthesis of coenzyme F420, a hydride carrier cofactor. The polypeptide is 2-phospho-L-lactate guanylyltransferase (Methanosarcina acetivorans (strain ATCC 35395 / DSM 2834 / JCM 12185 / C2A)).